The following is a 452-amino-acid chain: Alkane uptake protein A (452 aa).

The first 36 residues, 1 to 36 (MSERSVYMVLSPRFSVRAVSLAVAAVSASLSMPTSA), serve as a signal peptide directing secretion.

It belongs to the OmpP1/FadL family. In terms of assembly, interacts with the inner membrane protein AupB.

Its subcellular location is the cell outer membrane. Required for growth on alkanes. Probably involved in the uptake of micelle-solubilized alkanes. The sequence is that of Alkane uptake protein A from Marinobacter nauticus (strain ATCC 49840 / DSM 8798 / CIP 103578 / SP17) (Marinobacter hydrocarbonoclasticus).